The following is a 351-amino-acid chain: Nicotinate-nucleotide--dimethylbenzimidazole phosphoribosyltransferase (351 aa).

Catalysis depends on Glu318, which acts as the Proton acceptor.

Belongs to the CobT family.

The catalysed reaction is 5,6-dimethylbenzimidazole + nicotinate beta-D-ribonucleotide = alpha-ribazole 5'-phosphate + nicotinate + H(+). It functions in the pathway nucleoside biosynthesis; alpha-ribazole biosynthesis; alpha-ribazole from 5,6-dimethylbenzimidazole: step 1/2. Catalyzes the synthesis of alpha-ribazole-5'-phosphate from nicotinate mononucleotide (NAMN) and 5,6-dimethylbenzimidazole (DMB). The sequence is that of Nicotinate-nucleotide--dimethylbenzimidazole phosphoribosyltransferase from Shewanella frigidimarina (strain NCIMB 400).